Reading from the N-terminus, the 501-residue chain is Cytochrome P450 2J6 (501 aa).

C447 is a heme binding site.

This sequence belongs to the cytochrome P450 family. Heme serves as cofactor.

It localises to the endoplasmic reticulum membrane. Its subcellular location is the microsome membrane. It catalyses the reaction an organic molecule + reduced [NADPH--hemoprotein reductase] + O2 = an alcohol + oxidized [NADPH--hemoprotein reductase] + H2O + H(+). In Mus musculus (Mouse), this protein is Cytochrome P450 2J6 (Cyp2j6).